The chain runs to 166 residues: Large ribosomal subunit protein uL10 (166 aa).

This sequence belongs to the universal ribosomal protein uL10 family. Part of the ribosomal stalk of the 50S ribosomal subunit. The N-terminus interacts with L11 and the large rRNA to form the base of the stalk. The C-terminus forms an elongated spine to which L12 dimers bind in a sequential fashion forming a multimeric L10(L12)X complex.

In terms of biological role, forms part of the ribosomal stalk, playing a central role in the interaction of the ribosome with GTP-bound translation factors. The polypeptide is Large ribosomal subunit protein uL10 (Streptococcus uberis (strain ATCC BAA-854 / 0140J)).